The primary structure comprises 302 residues: Deoxyhypusine hydroxylase (302 aa).

N-acetylmethionine is present on M1. 5 HEAT-like PBS-type repeats span residues 54-80 (LKHE…VLQD), 87-113 (VRHE…YSSD), 174-200 (ERYR…GLHC), 205-231 (FRHE…ALAR), and 238-264 (VRHE…HADD). Fe cation-binding residues include H56, H89, and E90. Fe cation-binding residues include H207, H240, and E241.

Belongs to the deoxyhypusine hydroxylase family. Fe(2+) serves as cofactor.

The catalysed reaction is [eIF5A protein]-deoxyhypusine + AH2 + O2 = [eIF5A protein]-hypusine + A + H2O. The protein operates within protein modification; eIF5A hypusination. Functionally, catalyzes the hydroxylation of the N(6)-(4-aminobutyl)-L-lysine intermediate produced by deoxyhypusine synthase/DHPS on a critical lysine of the eukaryotic translation initiation factor 5A/eIF-5A. This is the second step of the post-translational modification of that lysine into an unusual amino acid residue named hypusine. Hypusination is unique to mature eIF-5A factor and is essential for its function. This is Deoxyhypusine hydroxylase from Homo sapiens (Human).